The following is a 375-amino-acid chain: Chaperone protein DnaJ (375 aa).

In terms of domain architecture, J spans 5-70 (DYYEILGVSK…QKRAAYDQYG (66 aa)). The segment at 130–208 (GVTKEIRIPT…CHGHGRVEKS (79 aa)) adopts a CR-type zinc-finger fold. 8 residues coordinate Zn(2+): Cys-143, Cys-146, Cys-160, Cys-163, Cys-182, Cys-185, Cys-196, and Cys-199. CXXCXGXG motif repeat units lie at residues 143 to 150 (CDVCHGSG), 160 to 167 (CPTCHGSG), 182 to 189 (CPHCQGRG), and 196 to 203 (CHKCHGHG).

This sequence belongs to the DnaJ family. In terms of assembly, homodimer. The cofactor is Zn(2+).

The protein localises to the cytoplasm. Functionally, participates actively in the response to hyperosmotic and heat shock by preventing the aggregation of stress-denatured proteins and by disaggregating proteins, also in an autonomous, DnaK-independent fashion. Unfolded proteins bind initially to DnaJ; upon interaction with the DnaJ-bound protein, DnaK hydrolyzes its bound ATP, resulting in the formation of a stable complex. GrpE releases ADP from DnaK; ATP binding to DnaK triggers the release of the substrate protein, thus completing the reaction cycle. Several rounds of ATP-dependent interactions between DnaJ, DnaK and GrpE are required for fully efficient folding. Also involved, together with DnaK and GrpE, in the DNA replication of plasmids through activation of initiation proteins. The protein is Chaperone protein DnaJ of Salmonella paratyphi A (strain ATCC 9150 / SARB42).